The chain runs to 348 residues: Eukaryotic translation initiation factor 3 subunit F (348 aa).

In terms of domain architecture, MPN spans 30–166; that stretch reads VVIQPQAIFS…TRTYISAPVG (137 aa). The span at 312-327 shows a compositional bias: gly residues; that stretch reads STAIGGTGAESGGQRG. The disordered stretch occupies residues 312–348; that stretch reads STAIGGTGAESGGQRGGQRNNRQRGGQQRNQAEELRA. The span at 328–341 shows a compositional bias: low complexity; sequence GQRNNRQRGGQQRN.

The protein belongs to the eIF-3 subunit F family. In terms of assembly, component of the eukaryotic translation initiation factor 3 (eIF-3) complex.

The protein localises to the cytoplasm. In terms of biological role, component of the eukaryotic translation initiation factor 3 (eIF-3) complex, which is involved in protein synthesis of a specialized repertoire of mRNAs and, together with other initiation factors, stimulates binding of mRNA and methionyl-tRNAi to the 40S ribosome. The eIF-3 complex specifically targets and initiates translation of a subset of mRNAs involved in cell proliferation. The chain is Eukaryotic translation initiation factor 3 subunit F from Coccidioides immitis (strain RS) (Valley fever fungus).